Consider the following 3412-residue polypeptide: Genome polyprotein (3412 aa).

Over 1–104 (MSGRKAQGKT…LSSRKRRSSE (104 aa)) the chain is Cytoplasmic. The interval 38 to 72 (PGPSRGVQGFIFFFLFNILTGKKLTTHLKRLWRML) is hydrophobic; homodimerization of capsid protein C. Positions 102–121 (SSEMTMMPLLILSMVILGGG) are cleaved as a propeptide — ER anchor for the capsid protein C, removed in mature form by serine protease NS3. Residues 105 to 125 (MTMMPLLILSMVILGGGVTLV) traverse the membrane as a helical segment. Residues 126-244 (RKNRWLLLNV…GERQLQKIER (119 aa)) lie on the Extracellular side of the membrane. 2 N-linked (GlcNAc...) asparagine; by host glycosylation sites follow: asparagine 134 and asparagine 150. The helical transmembrane segment at 245 to 265 (WLVRNPFFAVTALAIAYLVGN) threads the bilayer. The Cytoplasmic portion of the chain corresponds to 266–270 (NKTQR). A helical membrane pass occupies residues 271-285 (VVIALLVLAVGPAYS). At 286–730 (AHCIGITDRD…TVFGSAFQGL (445 aa)) the chain is on the extracellular side. 8 cysteine pairs are disulfide-bonded: cysteine 288–cysteine 315, cysteine 345–cysteine 401, cysteine 345–cysteine 406, cysteine 359–cysteine 390, cysteine 377–cysteine 401, cysteine 377–cysteine 406, cysteine 467–cysteine 568, and cysteine 585–cysteine 615. Residues 383-396 (DRGWGNGCGLFGKG) form a fusion peptide region. Residues 731–751 (FGGLSWITKVIMGAVLIWVGI) traverse the membrane as a helical segment. Topologically, residues 752 to 757 (NTRNMT) are extracellular. A helical transmembrane segment spans residues 758 to 778 (MSMSMILVGVIMMFLSLGVGA). Residues 779–1132 (DQGCAVNFGK…LVRSWVTAGE (354 aa)) lie on the Extracellular side of the membrane. 6 disulfides stabilise this stretch: cysteine 782–cysteine 793, cysteine 833–cysteine 921, cysteine 957–cysteine 1002, cysteine 1058–cysteine 1107, cysteine 1069–cysteine 1091, and cysteine 1090–cysteine 1094. Residues asparagine 908 and asparagine 986 are each glycosylated (N-linked (GlcNAc...) asparagine; by host). The helical transmembrane segment at 1133-1153 (VHAVPFGLVSMMIAMEVVLRK) threads the bilayer. Topologically, residues 1154-1201 (RQGPKQMLVGGIILLGAMLVGQVTMLDLVKLIVAVGLHFHEINNGGDA) are cytoplasmic. The helical transmembrane segment at 1202-1222 (MYMALIASFSIRPGLLIGFGL) threads the bilayer. The Lumenal portion of the chain corresponds to 1223 to 1287 (RTLWSPRERL…ILPLMALLTP (65 aa)). A helical membrane pass occupies residues 1288–1308 (VTMYEVRMATMLFCTVVIVGV). Residues 1309–1355 (LHQNSKDTSMQKTIPIVALTLTSYMGLTQPFLGLCAYMSTQVFGRRS) are Cytoplasmic-facing. Residues 1356-1376 (IPVNEALAAAGLVGVLAGLAF) form a helical membrane-spanning segment. Residues 1377-1378 (QD) lie on the Lumenal side of the membrane. Residues 1379–1399 (MENFLGPIAVGGILMMLVSVA) traverse the membrane as a helical segment. The Cytoplasmic portion of the chain corresponds to 1400-1456 (GKVDGLELKKLGEVSWEEEAEISGSSSRYDVALSEQGEFKLLSEDKVPWDQIVMTSL). The interval 1407–1446 (LKKLGEVSWEEEAEISGSSSRYDVALSEQGEFKLLSEDKV) is interacts with and activates NS3 protease. The helical intramembrane region spans 1457–1477 (ALVGAAIHPFALLLVLGGWVL). Topologically, residues 1478-2157 (HIKGARRSGD…RNALSMMPEA (680 aa)) are cytoplasmic. The 181-residue stretch at 1485–1665 (SGDVLWDIPT…EVKEESKEEL (181 aa)) folds into the Peptidase S7 domain. Catalysis depends on charge relay system; for serine protease NS3 activity residues histidine 1537, aspartate 1561, and serine 1622. The Helicase ATP-binding domain occupies 1669-1825 (PTMLKKGMTT…HSNGEIEDVQ (157 aa)). An important for RNA-binding region spans residues 1673-1676 (KKGM). 1682–1689 (FHPGAGKT) contacts ATP. A DEAH box motif is present at residues 1773–1776 (DEAH). Positions 1820 to 1997 (EIEDVQTDIP…VRGGMVAPLY (178 aa)) constitute a Helicase C-terminal domain. Lysine 1877 is subject to N6-acetyllysine; by host. Residues 1942-1961 (AAQRRGRIGRNPNRDGDSYY) form a disordered region. A helical transmembrane segment spans residues 2158–2178 (MTIVMLFILAGLLTSGMVIFF). Residues 2179 to 2186 (MSPKGMSR) lie on the Lumenal side of the membrane. An intramembrane region (helical) is located at residues 2187–2207 (MSMAMGTMAGSGYLMFLGGVK). Topologically, residues 2208–2209 (PT) are lumenal. Residues 2210–2230 (HISYVMLIFFVLMVVIIPEPG) form a helical membrane-spanning segment. The Cytoplasmic portion of the chain corresponds to 2231–2241 (QQRSIQDNQVA). Residues 2242-2262 (YLIIGILTLLSVVAANELGML) traverse the membrane as a helical segment. Over 2263–2293 (EKTKEDFFGKRNIATSGGTIPWSWPDLDLKP) the chain is Lumenal. An intramembrane region (helical) is located at residues 2294–2314 (GAAWTVYVGIVTMLSPMLHHW). At 2315 to 2360 (IKVEYGNLSLSGIAQSASVLSFMDKGVPFMKMNISVVILLVSGWNS) the chain is on the lumenal side. The helical transmembrane segment at 2361-2380 (ITVIPLLCGVGGAMLHWTLI) threads the bilayer. Residues 2381–2421 (LPGIKAQQSKLAQKRVFHGVAKNPVVDGNPTADIEEAPEMP) lie on the Cytoplasmic side of the membrane. Residues 2422–2442 (ALYEKKLALYLLLALSLMSVA) form a helical membrane-spanning segment. Residues 2443–2445 (MCR) are Lumenal-facing. Residues 2446 to 2466 (TPFSLAEGIVLSSAALGPLIE) traverse the membrane as a helical segment. The Cytoplasmic portion of the chain corresponds to 2467–3411 (GNTSLLWNGP…VDADLQPGEL (945 aa)). The mRNA cap 0-1 NS5-type MT domain occupies 2508-2772 (GSANGKTLGE…DVILPIGTRS (265 aa)). S-adenosyl-L-methionine is bound at residue serine 2563. Serine 2563 carries the post-translational modification Phosphoserine. Lysine 2568 acts as the For 2'-O-MTase activity in catalysis. S-adenosyl-L-methionine-binding residues include glycine 2593, tryptophan 2594, threonine 2611, leucine 2612, aspartate 2638, and isoleucine 2639. Residue aspartate 2653 is the For 2'-O-MTase activity of the active site. Isoleucine 2654 is a binding site for S-adenosyl-L-methionine. Residues lysine 2689 and glutamate 2725 each act as for 2'-O-MTase activity in the active site. Tyrosine 2727 provides a ligand contact to S-adenosyl-L-methionine. Residues 2879 to 2912 (RKIMRVVNRWLFRHLAREKKPRLCTKEEFIAKVR) carry the Nuclear localization signal motif. Residues glutamate 2946, histidine 2950, cysteine 2955, and cysteine 2958 each contribute to the Zn(2+) site. The region spanning 3036–3188 (GGFYADDTAG…KPVDDRFGLA (153 aa)) is the RdRp catalytic domain. Histidine 3223, cysteine 3239, and cysteine 3358 together coordinate Zn(2+).

In the N-terminal section; belongs to the class I-like SAM-binding methyltransferase superfamily. mRNA cap 0-1 NS5-type methyltransferase family. In terms of assembly, homodimer. Interacts (via N-terminus) with host EXOC1 (via C-terminus); this interaction results in EXOC1 degradation through the proteasome degradation pathway. As to quaternary structure, forms heterodimers with envelope protein E in the endoplasmic reticulum and Golgi. Homodimer; in the endoplasmic reticulum and Golgi. Interacts with protein prM. Interacts with non-structural protein 1. In terms of assembly, homodimer; Homohexamer when secreted. Interacts with envelope protein E. As to quaternary structure, interacts (via N-terminus) with serine protease NS3. Forms a heterodimer with serine protease NS3. May form homooligomers. In terms of assembly, forms a heterodimer with NS2B. Interacts with non-structural protein 2A (via N-terminus). Interacts with NS4B. Interacts with unphosphorylated RNA-directed RNA polymerase NS5; this interaction stimulates RNA-directed RNA polymerase NS5 guanylyltransferase activity. NS3 interacts with host PDCD6IP; this interaction contributes to virion release. As to quaternary structure, interacts with serine protease NS3. Homodimer. Interacts with host STAT2; this interaction prevents the establishment of cellular antiviral state. Interacts with serine protease NS3. Interacts with host TRIM23; this interaction leads to NS5 ubiquitination. Specific enzymatic cleavages in vivo yield mature proteins. The nascent capsid protein C contains a C-terminal hydrophobic domain that act as a signal sequence for translocation of prM into the lumen of the ER. Mature capsid protein C is cleaved at a site upstream of this hydrophobic domain by NS3. prM is cleaved in post-Golgi vesicles by a host furin, releasing the mature small envelope protein M, and peptide pr. Non-structural protein 2A-alpha, a C-terminally truncated form of non-structural protein 2A, results from partial cleavage by NS3. Specific enzymatic cleavages in vivo yield mature proteins peptide 2K acts as a signal sequence and is removed from the N-terminus of NS4B by the host signal peptidase in the ER lumen. Signal cleavage at the 2K-4B site requires a prior NS3 protease-mediated cleavage at the 4A-2K site. Post-translationally, cleaved in post-Golgi vesicles by a host furin, releasing the mature small envelope protein M, and peptide pr. This cleavage is incomplete as up to 30% of viral particles still carry uncleaved prM. In terms of processing, N-glycosylated. N-glycosylated. The excreted form is glycosylated and this is required for efficient secretion of the protein from infected cells. Post-translationally, polyubiquitinated; ubiquitination is probably mediated by host TRIM23 and is prerequisite for NS5-STAT2 interaction. NS5 is not ISGylated or sumoylated. In terms of processing, acetylated by host KAT5. Acetylation modulates NS3 RNA-binding and unwinding activities and plays an important positive role for viral replication. Phosphorylated on serines residues. This phosphorylation may trigger NS5 nuclear localization.

Its subcellular location is the virion. It localises to the host nucleus. The protein resides in the host cytoplasm. The protein localises to the host perinuclear region. It is found in the secreted. Its subcellular location is the virion membrane. It localises to the host endoplasmic reticulum membrane. The enzyme catalyses Selective hydrolysis of -Xaa-Xaa-|-Yaa- bonds in which each of the Xaa can be either Arg or Lys and Yaa can be either Ser or Ala.. It carries out the reaction RNA(n) + a ribonucleoside 5'-triphosphate = RNA(n+1) + diphosphate. The catalysed reaction is a ribonucleoside 5'-triphosphate + H2O = a ribonucleoside 5'-diphosphate + phosphate + H(+). It catalyses the reaction ATP + H2O = ADP + phosphate + H(+). The enzyme catalyses a 5'-end (5'-triphosphoguanosine)-ribonucleoside in mRNA + S-adenosyl-L-methionine = a 5'-end (N(7)-methyl 5'-triphosphoguanosine)-ribonucleoside in mRNA + S-adenosyl-L-homocysteine. It carries out the reaction a 5'-end (N(7)-methyl 5'-triphosphoguanosine)-ribonucleoside in mRNA + S-adenosyl-L-methionine = a 5'-end (N(7)-methyl 5'-triphosphoguanosine)-(2'-O-methyl-ribonucleoside) in mRNA + S-adenosyl-L-homocysteine + H(+). In terms of biological role, plays a role in virus budding by binding to the cell membrane and gathering the viral RNA into a nucleocapsid that forms the core of a mature virus particle. During virus entry, may induce genome penetration into the host cytoplasm after hemifusion induced by the surface proteins. Can migrate to the cell nucleus where it modulates host functions. Inhibits RNA silencing by interfering with host Dicer. Its function is as follows. Prevents premature fusion activity of envelope proteins in trans-Golgi by binding to envelope protein E at pH6.0. After virion release in extracellular space, gets dissociated from E dimers. Functionally, acts as a chaperone for envelope protein E during intracellular virion assembly by masking and inactivating envelope protein E fusion peptide. prM is the only viral peptide matured by host furin in the trans-Golgi network probably to avoid catastrophic activation of the viral fusion activity in acidic Golgi compartment prior to virion release. prM-E cleavage is inefficient, and many virions are only partially matured. These uncleaved prM would play a role in immune evasion. In terms of biological role, may play a role in virus budding. Exerts cytotoxic effects by activating a mitochondrial apoptotic pathway through M ectodomain. May display a viroporin activity. Binds to host cell surface receptor and mediates fusion between viral and cellular membranes. Envelope protein is synthesized in the endoplasmic reticulum in the form of heterodimer with protein prM. They play a role in virion budding in the ER, and the newly formed immature particle is covered with 60 spikes composed of heterodimer between precursor prM and envelope protein E. The virion is transported to the Golgi apparatus where the low pH causes dissociation of PrM-E heterodimers and formation of E homodimers. prM-E cleavage is inefficient, and many virions are only partially matured. These uncleaved prM would play a role in immune evasion. Its function is as follows. Involved in immune evasion, pathogenesis and viral replication. Once cleaved off the polyprotein, is targeted to three destinations: the viral replication cycle, the plasma membrane and the extracellular compartment. Essential for viral replication. Required for formation of the replication complex and recruitment of other non-structural proteins to the ER-derived membrane structures. Excreted as a hexameric lipoparticle that plays a role against host immune response. Antagonizing the complement function. Binds to the host macrophages and dendritic cells. Inhibits signal transduction originating from Toll-like receptor 3 (TLR3). Functionally, component of the viral RNA replication complex that functions in virion assembly and antagonizes the host immune response. In terms of biological role, required cofactor for the serine protease function of NS3. May have membrane-destabilizing activity and form viroporins. Displays three enzymatic activities: serine protease, NTPase and RNA helicase. NS3 serine protease, in association with NS2B, performs its autocleavage and cleaves the polyprotein at dibasic sites in the cytoplasm: C-prM, NS2A-NS2B, NS2B-NS3, NS3-NS4A, NS4A-2K and NS4B-NS5. NS3 RNA helicase binds RNA and unwinds dsRNA in the 3' to 5' direction. Also plays a role in virus assembly. Its function is as follows. Regulates the ATPase activity of the NS3 helicase activity. NS4A allows NS3 helicase to conserve energy during unwinding. Functionally, functions as a signal peptide for NS4B and is required for the interferon antagonism activity of the latter. In terms of biological role, induces the formation of ER-derived membrane vesicles where the viral replication takes place. Inhibits interferon (IFN)-induced host STAT1 phosphorylation and nuclear translocation, thereby preventing the establishment of cellular antiviral state by blocking the IFN-alpha/beta pathway. Replicates the viral (+) and (-) RNA genome, and performs the capping of genomes in the cytoplasm. NS5 methylates viral RNA cap at guanine N-7 and ribose 2'-O positions. Besides its role in RNA genome replication, also prevents the establishment of cellular antiviral state by blocking the interferon-alpha/beta (IFN-alpha/beta) signaling pathway. IFN-I induces binding of NS5 to host IFN-activated transcription factor STAT2, preventing its transcriptional activity. Host TRIM23 is the E3 ligase that interacts with and polyubiquitinates NS5 to promote its binding to STAT2 and trigger IFN-I signaling inhibition. In Yellow fever virus (isolate Uganda/A7094A4/1948) (YFV), this protein is Genome polyprotein.